Reading from the N-terminus, the 80-residue chain is MAFLKKSLFLVLFLGIVSLSICEEEKREGEEEEKQEEENEELSEEELRERRALLDKLKSLGKVVGKVALGVAQHYLNPQQ.

The N-terminal stretch at 1–22 (MAFLKKSLFLVLFLGIVSLSIC) is a signal peptide. Positions 23–49 (EEEKREGEEEEKQEEENEELSEEELRE) are excised as a propeptide. The disordered stretch occupies residues 27-46 (REGEEEEKQEEENEELSEEE). Positions 30-44 (EEEEKQEEENEELSE) are enriched in acidic residues.

Belongs to the frog skin active peptide (FSAP) family. Dermaseptin subfamily. In terms of tissue distribution, expressed by the skin glands.

The protein resides in the secreted. In terms of biological role, has antibacterial activity. The sequence is that of Raniseptin-7 from Boana raniceps (Chaco tree frog).